The following is a 239-amino-acid chain: Serine protease SplF (239 aa).

The N-terminal stretch at 1 to 36 (MNKNIIIKSIGALTILTSITGVGTTMVEGIQQTAKA) is a signal peptide. Residues His75, Asp114, and Ser192 each act as charge relay system in the active site.

The protein belongs to the peptidase S1B family.

The protein localises to the secreted. The protein is Serine protease SplF (splF) of Staphylococcus aureus (strain USA300).